The primary structure comprises 426 residues: Histidine--tRNA ligase (426 aa).

Belongs to the class-II aminoacyl-tRNA synthetase family. Homodimer.

Its subcellular location is the cytoplasm. The catalysed reaction is tRNA(His) + L-histidine + ATP = L-histidyl-tRNA(His) + AMP + diphosphate + H(+). This Hydrogenovibrio crunogenus (strain DSM 25203 / XCL-2) (Thiomicrospira crunogena) protein is Histidine--tRNA ligase.